Reading from the N-terminus, the 253-residue chain is Phycocyanobilin:ferredoxin oxidoreductase (253 aa).

Belongs to the HY2 family.

The catalysed reaction is (2R,3Z)-phycocyanobilin + 4 oxidized [2Fe-2S]-[ferredoxin] = biliverdin IXalpha + 4 reduced [2Fe-2S]-[ferredoxin] + 4 H(+). In terms of biological role, catalyzes the four-electron reduction of biliverdin IX-alpha (2-electron reduction at both the A and D rings); the reaction proceeds via an isolatable 2-electron intermediate, 181,182-dihydrobiliverdin. In Gloeobacter violaceus (strain ATCC 29082 / PCC 7421), this protein is Phycocyanobilin:ferredoxin oxidoreductase (pcyA).